The primary structure comprises 44 residues: Unknown protein 1 (44 aa).

This is Unknown protein 1 from Lonomia obliqua (Moth).